We begin with the raw amino-acid sequence, 1257 residues long: Period circadian protein homolog 2 (1257 aa).

The tract at residues 1 to 60 is disordered; it reads MNGYVDFSPSPTSPTKEPGAPQPTQAVLQEDVDMSSGSSGNENCSTGRDSQGSDCDDNGK. The segment covering 35–53 has biased composition (polar residues); it reads SSGSSGNENCSTGRDSQGS. Residues 109–118 carry the Nuclear export signal 1 motif; that stretch reads LIRTLKELKV. One can recognise a PAS 1 domain in the interval 179-246; it reads ITSEYIVKNA…FHSYTTPYKL (68 aa). The LXXLL signature appears at 306–310; it reads LCCLL. The 67-residue stretch at 319–385 folds into the PAS 2 domain; it reads YEAPRIPPEK…MLAIHKKILQ (67 aa). The PAC domain occupies 393 to 436; that stretch reads YSPIRFRTRNGEYITLDTSWSSFINPWSRKISFIIGRHKVRVGP. A Nuclear export signal 2 motif is present at residues 460-469; sequence LTEQIHRLLM. Disordered stretches follow at residues 471-565 and 617-638; these read PVPH…GASL and PSRK…PSKV. The segment at 478–482 is important for protein stability; that stretch reads SGYGS. A compositionally biased stretch (polar residues) spans 493–504; that stretch reads MSQTSSSDSNGQ. The CSNK1E binding domain stretch occupies residues 510-709; the sequence is RRSGIFKTSG…GAAGGLSQEK (200 aa). A phosphoserine mark is found at Ser-525, Ser-528, Ser-531, Ser-538, and Ser-544. At Thr-554 the chain carries Phosphothreonine. Phosphoserine occurs at positions 659, 693, 697, 706, 758, and 763. Residues 757–832 are disordered; that stretch reads RSRAQASDRG…SDTSQSSCPS (76 aa). A Nuclear localization signal motif is present at residues 778–794; it reads KKTGKNRKLKSKRVKTR. Positions 779 to 792 are enriched in basic residues; that stretch reads KTGKNRKLKSKRVK. Positions 821–832 are enriched in low complexity; the sequence is SPSDTSQSSCPS. The residue at position 858 (Thr-858) is a Phosphothreonine. Residues 882-1067 form an interaction with PPARG region; the sequence is EFAVQPLPFA…DLCSATGSAL (186 aa). Residue Ser-939 is modified to Phosphoserine. Thr-964 bears the Phosphothreonine mark. Ser-971 is subject to Phosphoserine. Residues 983-990 carry the Nuclear export signal 3 motif; it reads LQLNLLQL. Residues 994–1044 form a disordered region; the sequence is PEGSTGAAGTLGTTGTAASGLDCTSGTSRDRQPKAPPTCNEPSDTQNSDAI. Over residues 996 to 1014 the composition is skewed to low complexity; that stretch reads GSTGAAGTLGTTGTAASGL. The segment covering 1033 to 1044 has biased composition (polar residues); that stretch reads NEPSDTQNSDAI. Residues 1051–1055 carry the LXXLL motif; it reads LNLLL. A compositionally biased stretch (low complexity) spans 1070-1092; sequence SGASATSDSLGSSSLGFGTSQSG. Residues 1070 to 1115 form a disordered region; sequence SGASATSDSLGSSSLGFGTSQSGAGSSDTSHTSKYFGSIDSSENNH. The segment covering 1093-1111 has biased composition (polar residues); the sequence is AGSSDTSHTSKYFGSIDSS. The residue at position 1126 (Ser-1126) is a Phosphoserine. Residues 1157–1257 are CRY binding domain; that stretch reads SRDLQAVLKE…LTGPRIEAQT (101 aa). A disordered region spans residues 1224-1257; sequence PYEEDSPSPGLCDTSEAKEEEGEQLTGPRIEAQT.

In terms of assembly, homodimer. Component of the circadian core oscillator, which includes the CRY proteins, CLOCK or NPAS2, BMAL1 or BMAL2, CSNK1D and/or CSNK1E, TIMELESS, and the PER proteins. Interacts with CLOCK-BMAL1 (off DNA). Interacts with BMAL2. Interacts directly with PER1 and PER3, and through a C-terminal domain, with CRY1 and CRY2. Interacts (via PAS 2 domain) with TIMELESS. Interacts with NFIL3. Different large complexes have been identified with different repressive functions. The core of PER complexes is composed of at least PER1, PER2, PER3, CRY1, CRY2, CSNK1D and/or CSNK1E. The large PER complex involved in the repression of transcriptional termination is composed of at least PER2, CDK9, DDX5, DHX9, NCBP1 and POLR2A (active). The large PER complex involved in the histone deacetylation is composed of at least HDAC1, PER2, SFPQ and SIN3A. The large PER complex involved in the histone methylation is composed of at least PER2, CBX3, TRIM28, SUV39H1 and/or SUV39H2; CBX3 mediates the formation of the complex. Interacts with SETX; the interaction inhibits termination of circadian target genes. Interacts with the nuclear receptors HNF4A, NR1D1, NR4A2, RORA, PPARA, PPARG and THRA; the interaction with at least PPARG is ligand dependent. Interacts with PML. Interacts (phosphorylated) with BTRC and FBXW11; the interactions trigger proteasomal degradation. Interacts with NONO and SFPQ. Interacts with CAVIN3. Interacts with MAGEL2. Interacts with MAP1LC3B. Interacts with HNF4A. Post-translationally, acetylated. Deacetylated by SIRT1, resulting in decreased protein stability. Deacetylated by SIRT6, preventing its degradation by the proteasome, resulting in increased protein stability. Phosphorylated by CSNK1E and CSNK1D. Phosphorylation results in PER2 protein degradation. May be dephosphorylated by PP1. In terms of processing, ubiquitinated, leading to its proteasomal degradation. Ubiquitination may be inhibited by CRY1. In the brain, high expression in SCN during the subjective day. Constitutive expression in the cornu ammonis and in the dentate gyrus of the hippocampus. Also expressed in the piriform cortex and the glomeruli of the olfactory bulb, and at a lower extent in the cerebral cortex. Not expressed in the pars tuberalis and the Purkinje neurons. Also expressed in adipose tissue (white and brown), heart, kidney, bladder, lumbar spinal cord, skeletal muscle, spleen, lung, pancreas and liver with highest levels in skeletal muscle and liver and lowest levels in spleen.

The protein localises to the nucleus. The protein resides in the cytoplasm. It is found in the perinuclear region. Functionally, transcriptional repressor which forms a core component of the circadian clock. The circadian clock, an internal time-keeping system, regulates various physiological processes through the generation of approximately 24 hour circadian rhythms in gene expression, which are translated into rhythms in metabolism and behavior. It is derived from the Latin roots 'circa' (about) and 'diem' (day) and acts as an important regulator of a wide array of physiological functions including metabolism, sleep, body temperature, blood pressure, endocrine, immune, cardiovascular, and renal function. Consists of two major components: the central clock, residing in the suprachiasmatic nucleus (SCN) of the brain, and the peripheral clocks that are present in nearly every tissue and organ system. Both the central and peripheral clocks can be reset by environmental cues, also known as Zeitgebers (German for 'timegivers'). The predominant Zeitgeber for the central clock is light, which is sensed by retina and signals directly to the SCN. The central clock entrains the peripheral clocks through neuronal and hormonal signals, body temperature and feeding-related cues, aligning all clocks with the external light/dark cycle. Circadian rhythms allow an organism to achieve temporal homeostasis with its environment at the molecular level by regulating gene expression to create a peak of protein expression once every 24 hours to control when a particular physiological process is most active with respect to the solar day. Transcription and translation of core clock components (CLOCK, NPAS2, BMAL1, BMAL2, PER1, PER2, PER3, CRY1 and CRY2) plays a critical role in rhythm generation, whereas delays imposed by post-translational modifications (PTMs) are important for determining the period (tau) of the rhythms (tau refers to the period of a rhythm and is the length, in time, of one complete cycle). A diurnal rhythm is synchronized with the day/night cycle, while the ultradian and infradian rhythms have a period shorter and longer than 24 hours, respectively. Disruptions in the circadian rhythms contribute to the pathology of cardiovascular diseases, cancer, metabolic syndrome and aging. A transcription/translation feedback loop (TTFL) forms the core of the molecular circadian clock mechanism. Transcription factors, CLOCK or NPAS2 and BMAL1 or BMAL2, form the positive limb of the feedback loop, act in the form of a heterodimer and activate the transcription of core clock genes and clock-controlled genes (involved in key metabolic processes), harboring E-box elements (5'-CACGTG-3') within their promoters. The core clock genes: PER1/2/3 and CRY1/2 which are transcriptional repressors form the negative limb of the feedback loop and interact with the CLOCK|NPAS2-BMAL1|BMAL2 heterodimer inhibiting its activity and thereby negatively regulating their own expression. This heterodimer also activates nuclear receptors NR1D1/2 and RORA/B/G, which form a second feedback loop and which activate and repress BMAL1 transcription, respectively. PER1 and PER2 proteins transport CRY1 and CRY2 into the nucleus with appropriate circadian timing, but also contribute directly to repression of clock-controlled target genes through interaction with several classes of RNA-binding proteins, helicases and others transcriptional repressors. PER appears to regulate circadian control of transcription by at least three different modes. First, interacts directly with the CLOCK-BMAL1 at the tail end of the nascent transcript peak to recruit complexes containing the SIN3-HDAC that remodel chromatin to repress transcription. Second, brings H3K9 methyltransferases such as SUV39H1 and SUV39H2 to the E-box elements of the circadian target genes, like PER2 itself or PER1. The recruitment of each repressive modifier to the DNA seems to be very precisely temporally orchestrated by the large PER complex, the deacetylases acting before than the methyltransferases. Additionally, large PER complexes are also recruited to the target genes 3' termination site through interactions with RNA-binding proteins and helicases that may play a role in transcription termination to regulate transcription independently of CLOCK-BMAL1 interactions. Recruitment of large PER complexes to the elongating polymerase at PER and CRY termination sites inhibited SETX action, impeding RNA polymerase II release and thereby repressing transcriptional reinitiation. May propagate clock information to metabolic pathways via the interaction with nuclear receptors. Coactivator of PPARA and corepressor of NR1D1, binds rhythmically at the promoter of nuclear receptors target genes like BMAL1 or G6PC1. Directly and specifically represses PPARG proadipogenic activity by blocking PPARG recruitment to target promoters and thereby transcriptional activation. Required for fatty acid and lipid metabolism, is involved as well in the regulation of circulating insulin levels. Plays an important role in the maintenance of cardiovascular functions through the regulation of NO and vasodilatatory prostaglandins production in aortas. Controls circadian glutamate uptake in synaptic vesicles through the regulation of VGLUT1 expression. May also be involved in the regulation of inflammatory processes. Represses the CLOCK-BMAL1 induced transcription of BHLHE40/DEC1 and ATF4. Negatively regulates the formation of the TIMELESS-CRY1 complex by competing with TIMELESS for binding to CRY1. The chain is Period circadian protein homolog 2 (Per2) from Mus musculus (Mouse).